Here is a 69-residue protein sequence, read N- to C-terminus: Photosystem I reaction center subunit IV (69 aa).

It belongs to the PsaE family.

The protein resides in the cellular thylakoid membrane. Stabilizes the interaction between PsaC and the PSI core, assists the docking of the ferredoxin to PSI and interacts with ferredoxin-NADP oxidoreductase. This Prochlorococcus marinus (strain MIT 9515) protein is Photosystem I reaction center subunit IV.